Consider the following 144-residue polypeptide: Large ribosomal subunit protein uL15 (144 aa).

A disordered region spans residues 1–54 (MRLNTIKPGEGSKKTAKRVGRGIGSGLGKTCGRGHKGQKSRSGGFHKVGFEGGQ). Gly residues predominate over residues 21–31 (RGIGSGLGKTC).

This sequence belongs to the universal ribosomal protein uL15 family. Part of the 50S ribosomal subunit.

Binds to the 23S rRNA. The chain is Large ribosomal subunit protein uL15 from Dechloromonas aromatica (strain RCB).